The sequence spans 202 residues: FMN-dependent NADH:quinone oxidoreductase 2 (202 aa).

Residues Ser-9, 15-17 (SAS), 95-98 (MYNF), and 139-142 (TAGG) contribute to the FMN site.

The protein belongs to the azoreductase type 1 family. In terms of assembly, homodimer. The cofactor is FMN.

It catalyses the reaction 2 a quinone + NADH + H(+) = 2 a 1,4-benzosemiquinone + NAD(+). The catalysed reaction is N,N-dimethyl-1,4-phenylenediamine + anthranilate + 2 NAD(+) = 2-(4-dimethylaminophenyl)diazenylbenzoate + 2 NADH + 2 H(+). Its function is as follows. Quinone reductase that provides resistance to thiol-specific stress caused by electrophilic quinones. Reduces both benzoquinones and naphthoquinones efficiently. In terms of biological role, also exhibits azoreductase activity. Catalyzes the reductive cleavage of the azo bond in aromatic azo compounds to the corresponding amines. Preferred substrates are the large bis-azo dye Ponceau BS, amaranth and tropaeolin O. In Pseudomonas aeruginosa (strain ATCC 15692 / DSM 22644 / CIP 104116 / JCM 14847 / LMG 12228 / 1C / PRS 101 / PAO1), this protein is FMN-dependent NADH:quinone oxidoreductase 2.